Here is a 1342-residue protein sequence, read N- to C-terminus: DNA-directed RNA polymerase subunit beta (1342 aa).

It belongs to the RNA polymerase beta chain family. As to quaternary structure, the RNAP catalytic core consists of 2 alpha, 1 beta, 1 beta' and 1 omega subunit. When a sigma factor is associated with the core the holoenzyme is formed, which can initiate transcription.

The enzyme catalyses RNA(n) + a ribonucleoside 5'-triphosphate = RNA(n+1) + diphosphate. Functionally, DNA-dependent RNA polymerase catalyzes the transcription of DNA into RNA using the four ribonucleoside triphosphates as substrates. This is DNA-directed RNA polymerase subunit beta from Glaesserella parasuis serovar 5 (strain SH0165) (Haemophilus parasuis).